Reading from the N-terminus, the 222-residue chain is Large ribosomal subunit protein uL3 (222 aa).

The interval 129 to 150 (HNFRGLPDSHGTERKHRSPGSI) is disordered.

Belongs to the universal ribosomal protein uL3 family. Part of the 50S ribosomal subunit. Forms a cluster with proteins L14 and L19.

In terms of biological role, one of the primary rRNA binding proteins, it binds directly near the 3'-end of the 23S rRNA, where it nucleates assembly of the 50S subunit. The protein is Large ribosomal subunit protein uL3 of Acidothermus cellulolyticus (strain ATCC 43068 / DSM 8971 / 11B).